Here is a 657-residue protein sequence, read N- to C-terminus: Glycogen debranching enzyme (657 aa).

The Nucleophile role is filled by D336. The Proton donor role is filled by E371. A disordered region spans residues 460-479 (ANGEENRDGTNNNHSFNHGI).

Belongs to the glycosyl hydrolase 13 family.

It carries out the reaction Hydrolysis of (1-&gt;6)-alpha-D-glucosidic linkages to branches with degrees of polymerization of three or four glucose residues in limit dextrin.. It functions in the pathway glycan degradation; glycogen degradation. Its function is as follows. Removes maltotriose and maltotetraose chains that are attached by 1,6-alpha-linkage to the limit dextrin main chain, generating a debranched limit dextrin. This chain is Glycogen debranching enzyme, found in Enterobacter sp. (strain 638).